We begin with the raw amino-acid sequence, 412 residues long: Subtilisin-like protease 6 (412 aa).

Positions 1 to 20 are cleaved as a signal peptide; the sequence is MGFITKAIPIVLAALSTVNG. The propeptide occupies 21–126; that stretch reads AKILEAGPHA…VVRTSTNGTN (106 aa). The Inhibitor I9 domain maps to 36–120; sequence KYIVVMKREV…YIEPDFVVRT (85 aa). N123 and N126 each carry an N-linked (GlcNAc...) asparagine glycan. The Peptidase S8 domain maps to 135–412; the sequence is SWGLARVSSK…SKLIYNGSGK (278 aa). Residues D167 and H198 each act as charge relay system in the active site. N-linked (GlcNAc...) asparagine glycans are attached at residues N252 and N264. S358 (charge relay system) is an active-site residue. N408 is a glycosylation site (N-linked (GlcNAc...) asparagine).

The protein belongs to the peptidase S8 family.

Its subcellular location is the secreted. Functionally, secreted subtilisin-like serine protease with keratinolytic activity that contributes to pathogenicity. The chain is Subtilisin-like protease 6 (SUB6) from Trichophyton equinum (Horse ringworm fungus).